We begin with the raw amino-acid sequence, 368 residues long: MSLLVFLCQIIVLSVLFFSEVCLAGKKIPANFVFGDSLVDAGNNNYLATLSKANYVPNGIDFGSPTGRFTNGRTIVDIVYQALGSDELTPPYLAPTTSGSLILNGVNYASGGSGILNSTGKLFGERINVDAQLDNFATTRQDIISWIGESEAAKLFRSAIFSVTTGSNDLINNYFTPVISTLQRKVVAPEVFVDTMISKFRLQLTRLYQLGARKIVVINIGPIGCIPFERESDPAAGNNCLAEPNEVAQMYNLKLKTLVEELNKNLQGSRFVYGDVFRIVDDIIQNYSSYGFESEKIPCCSLVGKVGGLIPCGPPSKVCMDRSKYVFWDPYHPTEAANIIIARRLLSGDTSDIYPINIRQLANLKINA.

An N-terminal signal peptide occupies residues 1 to 24 (MSLLVFLCQIIVLSVLFFSEVCLA). The Nucleophile role is filled by Ser-37. 2 N-linked (GlcNAc...) asparagine glycosylation sites follow: Asn-117 and Asn-286. Active-site residues include Asp-329 and His-332.

This sequence belongs to the 'GDSL' lipolytic enzyme family.

It is found in the secreted. This chain is GDSL esterase/lipase At4g16230, found in Arabidopsis thaliana (Mouse-ear cress).